A 126-amino-acid polypeptide reads, in one-letter code: MKLFIITVVTILTISRVFDKTPATTEARKSKKMVGHEHFNEYLDPTFAGHTFGVVKEDFLEVKKLKKIGDENNLKNRFINEFAPTNPEDSLGIGHPRVLNNKFTNDFAPTNPGDSPGIRHPGVVNV.

Positions 1–19 (MKLFIITVVTILTISRVFD) are cleaved as a signal peptide. Positions 20–80 (KTPATTEARK…ENNLKNRFIN (61 aa)) are excised as a propeptide. 2 positions are modified to hydroxyproline: Pro84 and Pro87. Positions 96–105 (PRVLNNKFTN) are excised as a propeptide. A hydroxyproline mark is found at Pro109, Pro112, and Pro116. Residues 121–126 (PGVVNV) constitute a propeptide that is removed on maturation.

The protein belongs to the C-terminally encoded plant signaling peptide (CEP) family. In terms of assembly, interacts with CEP receptors (e.g. CEPR1 and CEPR2). Post-translationally, the mature small signaling peptide is generated by proteolytic processing of the longer precursor. As to expression, mostly expressed in roots. Present in cotyledons, shoot apical meristem (SAM), leaves, inflorescence stems and flowers.

The protein resides in the secreted. It is found in the extracellular space. Its subcellular location is the apoplast. Extracellular signaling peptide that represses primary root growth rate. Negatively regulates the number of leaves and flowering, and modulates leaf morphology. Regulates systemic nitrogen (N)-demand signaling. Mediates up-regulation of genes involved in N uptake and assimilation pathways. The polypeptide is Precursor of CEP2 (Arabidopsis thaliana (Mouse-ear cress)).